Consider the following 414-residue polypeptide: Transforming growth factor beta-2 proprotein (414 aa).

The signal sequence occupies residues 1 to 20 (MHYCVLSAFLLLHLVTAALS). N-linked (GlcNAc...) asparagine glycans are attached at residues N72, N140, and N241. 4 disulfide bridges follow: C309–C318, C317–C380, C346–C411, and C350–C413.

This sequence belongs to the TGF-beta family. In terms of assembly, interacts with the serine proteases, HTRA1 and HTRA3. Interacts with ASPN. Interacts with MFAP5. As to quaternary structure, interacts with Transforming growth factor beta-2 (TGF-beta-2) chain; interaction is non-covalent and maintains (TGF-beta-2) in a latent state. Interacts with LRRC32/GARP; leading to regulate activation of TGF-beta-2. Interacts with NREP; the interaction results in a decrease in TGFB2 autoinduction. Transforming growth factor beta-2: Homodimer; disulfide-linked. Transforming growth factor beta-2: Interacts with TGF-beta receptors (TGFBR1 and TGFBR2), leading to signal transduction. The precursor proprotein is cleaved in the Golgi apparatus to form Transforming growth factor beta-2 (TGF-beta-2) and Latency-associated peptide (LAP) chains, which remain non-covalently linked, rendering TGF-beta-2 inactive.

The protein localises to the secreted. It is found in the extracellular space. The protein resides in the extracellular matrix. Its function is as follows. Precursor of the Latency-associated peptide (LAP) and Transforming growth factor beta-2 (TGF-beta-2) chains, which constitute the regulatory and active subunit of TGF-beta-2, respectively. In terms of biological role, required to maintain the Transforming growth factor beta-2 (TGF-beta-2) chain in a latent state during storage in extracellular matrix. Associates non-covalently with TGF-beta-2 and regulates its activation via interaction with 'milieu molecules', such as LTBP1 and LRRC32/GARP, that control activation of TGF-beta-2. Functionally, multifunctional protein that regulates various processes such as angiogenesis and heart development. Activation into mature form follows different steps: following cleavage of the proprotein in the Golgi apparatus, Latency-associated peptide (LAP) and Transforming growth factor beta-2 (TGF-beta-2) chains remain non-covalently linked rendering TGF-beta-2 inactive during storage in extracellular matrix. At the same time, LAP chain interacts with 'milieu molecules', such as LTBP1 and LRRC32/GARP, that control activation of TGF-beta-2 and maintain it in a latent state during storage in extracellular milieus. Once activated following release of LAP, TGF-beta-2 acts by binding to TGF-beta receptors (TGFBR1 and TGFBR2), which transduce signal. The protein is Transforming growth factor beta-2 proprotein (TGFB2) of Mustela putorius furo (European domestic ferret).